The following is an 89-amino-acid chain: Small ribosomal subunit protein uS15 (89 aa).

The protein belongs to the universal ribosomal protein uS15 family. As to quaternary structure, part of the 30S ribosomal subunit. Forms a bridge to the 50S subunit in the 70S ribosome, contacting the 23S rRNA.

In terms of biological role, one of the primary rRNA binding proteins, it binds directly to 16S rRNA where it helps nucleate assembly of the platform of the 30S subunit by binding and bridging several RNA helices of the 16S rRNA. Forms an intersubunit bridge (bridge B4) with the 23S rRNA of the 50S subunit in the ribosome. In Pectobacterium atrosepticum (strain SCRI 1043 / ATCC BAA-672) (Erwinia carotovora subsp. atroseptica), this protein is Small ribosomal subunit protein uS15.